Here is a 247-residue protein sequence, read N- to C-terminus: V-type proton ATPase subunit D (247 aa).

It belongs to the V-ATPase D subunit family. As to quaternary structure, V-ATPase is a heteromultimeric enzyme made up of two complexes: the ATP-hydrolytic V1 complex and the proton translocation V0 complex. The V1 complex consists of three catalytic AB heterodimers that form a heterohexamer, three peripheral stalks each consisting of EG heterodimers, one central rotor including subunits D and F, and the regulatory subunits C and H. The proton translocation complex V0 consists of the proton transport subunit a, a ring of proteolipid subunits c9c'', rotary subunit d, subunits e and f, and the accessory subunits ATP6AP1/Ac45 and ATP6AP2/PRR. Interacts with SNX10.

The protein resides in the membrane. Its subcellular location is the cytoplasmic vesicle. It is found in the clathrin-coated vesicle membrane. It localises to the cytoplasm. The protein localises to the cytoskeleton. The protein resides in the microtubule organizing center. Its subcellular location is the centrosome. It is found in the cell projection. It localises to the cilium. Functionally, subunit of the V1 complex of vacuolar(H+)-ATPase (V-ATPase), a multisubunit enzyme composed of a peripheral complex (V1) that hydrolyzes ATP and a membrane integral complex (V0) that translocates protons. V-ATPase is responsible for acidifying and maintaining the pH of intracellular compartments and in some cell types, is targeted to the plasma membrane, where it is responsible for acidifying the extracellular environment. May play a role in cilium biogenesis through regulation of the transport and the localization of proteins to the cilium. The polypeptide is V-type proton ATPase subunit D (Atp6v1d) (Mus musculus (Mouse)).